The following is a 248-amino-acid chain: MKYTLVGNGRMGQQVLGAIEASGEHTVHDILDVDAEISEQSFSGSDVIVDFTVRDAFLVNLPAMLASRVPVVVGTTGWDREMSIVRSMVEKSGSSLLYSANFSLGVNVFLRTVREAARMIAPFEDFDIAFSEQHHTAKADFPSGTALRAAEMILEANSRKKSIISQLSTDRKIEPDELQVAAIRLGSVFGQHAAAINSESDDIVVSHTARNRKGFAGGAVQAGKWLAQKHTEQPGFYTMDDFLDEVLG.

NAD(+) is bound by residues 74–76 (GTT) and 99–102 (SANF). Histidine 134 acts as the Proton donor/acceptor in catalysis. Histidine 135 is a (S)-2,3,4,5-tetrahydrodipicolinate binding site. Lysine 138 serves as the catalytic Proton donor. 144-145 (GT) provides a ligand contact to (S)-2,3,4,5-tetrahydrodipicolinate.

This sequence belongs to the DapB family.

It is found in the cytoplasm. It carries out the reaction (S)-2,3,4,5-tetrahydrodipicolinate + NAD(+) + H2O = (2S,4S)-4-hydroxy-2,3,4,5-tetrahydrodipicolinate + NADH + H(+). It catalyses the reaction (S)-2,3,4,5-tetrahydrodipicolinate + NADP(+) + H2O = (2S,4S)-4-hydroxy-2,3,4,5-tetrahydrodipicolinate + NADPH + H(+). It functions in the pathway amino-acid biosynthesis; L-lysine biosynthesis via DAP pathway; (S)-tetrahydrodipicolinate from L-aspartate: step 4/4. Functionally, catalyzes the conversion of 4-hydroxy-tetrahydrodipicolinate (HTPA) to tetrahydrodipicolinate. This Chlorobium phaeobacteroides (strain BS1) protein is 4-hydroxy-tetrahydrodipicolinate reductase.